The chain runs to 601 residues: Vesicular glutamate transporter 3 (601 aa).

Residues 1–89 are Cytoplasmic-facing; the sequence is MPFKAFDTFK…CSCCGIPKRY (89 aa). Residues 90 to 110 traverse the membrane as a helical segment; the sequence is IIAVMSGLGFCISFGIRCNLG. The Vesicular portion of the chain corresponds to 111–143; that stretch reads VAIVEMVNNSTVYVDGKPEIQTAQFNWDPETVG. An N-linked (GlcNAc...) asparagine glycan is attached at Asn-119. Residues 144 to 164 traverse the membrane as a helical segment; sequence LIHGSFFWGYIVTQIPGGFIS. The Cytoplasmic portion of the chain corresponds to 165 to 166; the sequence is NK. The chain crosses the membrane as a helical span at residues 167–187; that stretch reads FAASRVFGAAIFLTSTLNMFI. The Vesicular segment spans residues 188-195; sequence PSAARVHY. Residues 196 to 216 form a helical membrane-spanning segment; that stretch reads GCVMGVRILQGLVEGVTYPAC. At 217–234 the chain is on the cytoplasmic side; sequence HGMWSKWAPPLERSRLAT. The helical transmembrane segment at 235 to 255 threads the bilayer; the sequence is TSFCGSYAGAVVAMPLAGVLV. Over 256 to 262 the chain is Vesicular; the sequence is QYIGWAS. A helical membrane pass occupies residues 263 to 283; that stretch reads VFYIYGMFGIIWYMFWLLQAY. The Cytoplasmic segment spans residues 284–327; the sequence is ECPAAHPTISNAERTYIETSIGEGANLASLSKFNTPWRRFFTSL. A helical membrane pass occupies residues 328-348; it reads PVYAIIVANFCRSWTFYLLLI. Over 349–366 the chain is Vesicular; sequence SQPAYFEEVFGFAISKVG. The chain crosses the membrane as a helical span at residues 367-387; the sequence is LLSAVPHMVMTIVVPIGGQLA. Topologically, residues 388 to 403 are cytoplasmic; it reads DYLRSRKILTTTAVRK. A helical membrane pass occupies residues 404–424; it reads IMNCGGFGMEATLLLVVGFSH. Topologically, residues 425–426 are vesicular; the sequence is TK. A helical transmembrane segment spans residues 427–447; the sequence is GVAISFLVLAVGFSGFAISGF. Over 448–460 the chain is Cytoplasmic; sequence NVNHLDIAPRYAS. The helical transmembrane segment at 461-481 threads the bilayer; the sequence is ILMGISNGVGTLSGMVCPLIV. Residues 482 to 494 are Vesicular-facing; the sequence is GAMTKHKTREEWQ. The helical transmembrane segment at 495–515 threads the bilayer; the sequence is NVFLIAALVHYSGVIFYGVFA. At 516–598 the chain is on the cytoplasmic side; it reads SGEKQDWADP…LSYQAEGDFS (83 aa). The disordered stretch occupies residues 576–601; it reads RQQRESAFDGEEPLSYQAEGDFSETS.

This sequence belongs to the major facilitator superfamily. Sodium/anion cotransporter family. VGLUT subfamily. As to expression, expressed in restricted areas of the brain. Highest expression is found in the neurons of the basal forebrain, the hippocampal formation, and the majority of the neurons of the mesencephalic raphe nuclei. Expressed in inner hair cells of the ear.

Its subcellular location is the cytoplasmic vesicle. It localises to the secretory vesicle. It is found in the synaptic vesicle membrane. The protein localises to the cell membrane. The protein resides in the synapse. Its subcellular location is the synaptosome. The catalysed reaction is L-glutamate(out) = L-glutamate(in). The enzyme catalyses 3 Na(+)(out) + phosphate(out) = 3 Na(+)(in) + phosphate(in). It catalyses the reaction chloride(in) = chloride(out). The L-glutamate uniporter activity exhibits a biphasic dependence on chloride concentration. Chloride channel activity is allosterically activated by lumenal H(+) and Cl(-) leading to synaptic vesicles acidification. The L-glutamate transport activity is allosterically activated by lumenal H(+) and Cl(-), preventing non-vesicular L-glutamate release. Functionally, multifunctional transporter that transports L-glutamate as well as multiple ions such as chloride, sodium and phosphate. At the synaptic vesicle membrane, mainly functions as an uniporter that mediates the uptake of L-glutamate into synaptic vesicles at presynaptic nerve terminals of excitatory neural cells. The L-glutamate uniporter activity is electrogenic and is driven by the proton electrochemical gradient, mainly by the electrical gradient established by the vacuolar H(+)-ATPase across the synaptic vesicle membrane. In addition, functions as a chloride channel that allows a chloride permeation through the synaptic vesicle membrane that affects the proton electrochemical gradient and promotes synaptic vesicles acidification. At the plasma membrane, following exocytosis, functions as a symporter of Na(+) and phosphate from the extracellular space to the cytoplasm allowing synaptic phosphate homeostasis regulation. The symporter activity is electrogenic. Moreover, operates synergistically with SLC18A3/VACHT under a constant H(+) gradient, thereby allowing striatal vesicular acetylcholine uptake. This is Vesicular glutamate transporter 3 from Mus musculus (Mouse).